The sequence spans 1483 residues: MDVLELLRASANGCYNTLFSDAWFQYVSKQIATTMYWYGALLVIGVLFIAWFLYFKRLARLRLRDEIARSLSAVTSSGGDHRGLRFRKRDKMLFYGRRMLRKMKNVSGQMYSSGKGYKRRAVMRFARRILQLQRENRPLEMKTVEPPAEYLEETIEGSDRVPPDALYMLQSIRIFGHFEKPIFLKLCKHTQLLQLMAGDYLFKITDPDDSVYIVQSGMINVYICNADGSTLSLKTVRKGESVTSLLSFIDVLSGNSSYYKTVTAKAMEKSVVIRLPMQAFEEVFEENPDVMIRVIQVIMIRLQRVLFTALRNYLGLNAELVQNHMRTKGSSVVPNAVGGAVLAQASQASRPVVRAPTSPNSRLSREEHTLSDPDPNPNANALLFAEVHGDAPYIDLYHHQQQQSSAVSVNQAGTRRSSTTYGPSGESPNGNANTAPGTSIDQRLVQSSAVDSLRRELGLSEDDAQIIEPFVEVRELEPNVTLITEGNAEDVCVWFVMTGTLAVYQSNADATRATKQDSKNDVLIHFVHPGEIVGGLAMLTGEASAYTIRARSNSRVAYIRRAAIYQIMRQRPRIVLDLGNGVVRRLSPLVRQCDYALDWIFLESGRAVYRQDESSDSTYIVLSGRMRSVITHPGGKKEIIGEYGKGDLVGIVEMITETSRTTTVMAVRDSELAKLPEGLFNAIKLRYPIVVTRLISFLSHRFLGSMQTRGSNAAGGPVEANPVTHKYSTVALVPITDDVPLTPFTYELYHSLCAIGPVLRLTSEVVRKQLGINIFEAANEYRLTSWLAQQEDRNIITLYQCDSSLSPWTQRCMRQADVVLIVGLGERSHLVGKFEREIDKLAMRTQKELVLLYPETTNAKPANTLSWLNARPWVTKHHHVLCVKRIFTRKSQYRINDLYSRVLLSEPNMHSDFSRLARWLTGNSIGLVLGGGGARGAAHIGMLKAIQEAGIPIDMVGGVSIGALMGALWCSERNITTVTQKAREWSKKMTKWFLQLLDLTYPITSMFSGREFNKTIHDTFGDVSIEDLWIPYFTLTTDITASCHRIHTNGSLWRYVRSSMSLSGYMPPLCDPQDGHLLLDGGYVNNLPGHLWRYCRASMSIAGVFPPFCDYRDGHLLLDGCYTNNVPADVMHNLGAAHIIAIDVGSQDDTDLTNYGDDLSGWWLLYKKWNPFTSPVKVPDLPDIQSRLAYVSCVRQLEEVKNSDYCEYIRPPIDKYKTLAFGSFDEIRDVGYVFGKNYFDNMAKAGRLGRFNQWFNKEPPKRGNHASLNEYTFIDLAQIVCKLPETYALNTADIFSEDEDFDGYISEPTTLNMDRRRIQVPRAGNSLSFSETEMDSDVEIDLELERKVDKATQSTPPTPNKQHALSPTSSQTNLLPLPPNSKPKEKQPSYDKLDREHKRRQKSKQKQQQERSSMQQRDSMVTLHPATMAEATTQTAPHSSEEDELNKPEQQPEQKPVPETEEQQQKQQDQQQQENLTKTDTKN.

Over 1-34 the chain is Lumenal; the sequence is MDVLELLRASANGCYNTLFSDAWFQYVSKQIATT. Residues 35–55 traverse the membrane as a helical segment; it reads MYWYGALLVIGVLFIAWFLYF. Topologically, residues 56-1483 are cytoplasmic; that stretch reads KRLARLRLRD…ENLTKTDTKN (1428 aa). Residue 174 to 301 participates in a nucleoside 3',5'-cyclic phosphate binding; sequence IFGHFEKPIF…IRVIQVIMIR (128 aa). Disordered stretches follow at residues 348–380 and 404–440; these read ASRP…PNAN and SSAV…GTSI. Residues 413 to 440 show a composition bias toward polar residues; sequence GTRRSSTTYGPSGESPNGNANTAPGTSI. Residues serine 418 and serine 424 each carry the phosphoserine modification. Residues 456–585 and 574–701 each bind a nucleoside 3',5'-cyclic phosphate; these read ELGL…VVRR and IVLD…LSHR. The 167-residue stretch at 927-1093 folds into the PNPLA domain; sequence LVLGGGGARG…VNNLPGHLWR (167 aa). Positions 931 to 936 match the GXGXXG motif; it reads GGGARG. The GXSXG motif lies at 958–962; that stretch reads GVSIG. Serine 960 serves as the catalytic Nucleophile. Aspartate 1080 acts as the Proton acceptor in catalysis. The DGA/G signature appears at 1080–1082; that stretch reads DGG. Residue serine 1174 is modified to Phosphoserine. The interval 1349 to 1483 is disordered; it reads DKATQSTPPT…ENLTKTDTKN (135 aa). Positions 1351 to 1373 are enriched in polar residues; sequence ATQSTPPTPNKQHALSPTSSQTN. The span at 1382 to 1396 shows a compositional bias: basic and acidic residues; sequence KPKEKQPSYDKLDRE. The span at 1410-1419 shows a compositional bias: low complexity; the sequence is ERSSMQQRDS. The span at 1445 to 1458 shows a compositional bias: basic and acidic residues; sequence LNKPEQQPEQKPVP. Residues 1465-1474 are compositionally biased toward low complexity; it reads QKQQDQQQQE.

The protein belongs to the NTE family. In terms of assembly, interacts with Pka-C3; interaction inhibits the catalytic function of Pka-C3 and the esterase activity of sws.

It localises to the endoplasmic reticulum membrane. It carries out the reaction a 1-acyl-sn-glycero-3-phosphocholine + H2O = sn-glycerol 3-phosphocholine + a fatty acid + H(+). In terms of biological role, phospholipase B that deacylates intracellular phosphatidylcholine (PtdCho), generating glycerophosphocholine (GroPtdCho). This deacylation occurs at both sn-2 and sn-1 positions of PtdCho. Its specific chemical modification by certain organophosphorus (OP) compounds leads to distal axonopathy. Plays a role in the signaling mechanism between neurons and glia that regulates glia wrapping during development of the adult brain. Essential for membrane lipid homeostasis and cell survival in both neurons and glia of the adult brain. This Drosophila virilis (Fruit fly) protein is Neuropathy target esterase sws.